Reading from the N-terminus, the 410-residue chain is Magnesium transporter NIPA3 (410 aa).

Residues 1 to 67 are Extracellular-facing; the sequence is MGAQVRLPPG…ISANVENKYS (67 aa). Asn25, Asn35, Asn50, and Asn55 each carry an N-linked (GlcNAc...) asparagine glycan. Residues 68 to 88 traverse the membrane as a helical segment; sequence LYVGLVLAVSSSIFIGSSFIL. Residues 89 to 114 are Cytoplasmic-facing; sequence KKKGLLQLASKGFTRAGQGGHSYLKE. Residues 115 to 135 traverse the membrane as a helical segment; sequence WLWWVGLLSMGAGEAANFAAY. Ala136 is a topological domain (extracellular). Residues 137–157 traverse the membrane as a helical segment; the sequence is FAPATLVTPLGALSVLISAIL. Topologically, residues 158–165 are cytoplasmic; that stretch reads SSYFLNEH. Residues 166-186 traverse the membrane as a helical segment; the sequence is LNIHGKIGCILSILGSTVMVI. The Extracellular segment spans residues 187-207; sequence HAPQEEEVTSLHEMEMKLRDP. Residues 208-228 traverse the membrane as a helical segment; the sequence is GFISFAVIITVISLVLILIVA. Residues 229–233 lie on the Cytoplasmic side of the membrane; the sequence is PKKGQ. Residues 234 to 254 form a helical membrane-spanning segment; it reads TNILVYISICSLIGAFSVSSV. At 255-273 the chain is on the extracellular side; sequence KGLGIAIKELIEWKPVYKH. A helical membrane pass occupies residues 274-294; the sequence is PLVFVLLAVLVLSVTTQINYL. The Cytoplasmic segment spans residues 295–305; sequence NKALDTFNTSL. A helical transmembrane segment spans residues 306-326; the sequence is VTPIYYVFFTSMVVTCSAILF. Residues 327 to 336 lie on the Extracellular side of the membrane; it reads QEWYGMTAGD. A helical membrane pass occupies residues 337-357; that stretch reads IIGTLSGFFTIIIGIFLLHAF. The Cytoplasmic portion of the chain corresponds to 358-410; it reads KNTDITWSELTSTAKKEAVSLNVNENNYVLLENLECSAPGYNDDVTLFSRTDD.

Belongs to the NIPA family. As to expression, expressed in the pancreatic islets.

The protein localises to the golgi apparatus membrane. It carries out the reaction Mg(2+)(in) = Mg(2+)(out). Functionally, acts as a Mg(2+) transporter. Can also transport other divalent cations such as Fe(2+), Sr(2+), Ba(2+), Mn(2+), Cu(2+) and Co(2+) but to a much less extent than Mg(2+). The sequence is that of Magnesium transporter NIPA3 (NIPAL1) from Homo sapiens (Human).